Reading from the N-terminus, the 591-residue chain is MKTGRVIKVSGPLVIAEGMEEANIYDLVKVGEKRLIGEIIEMRGDKASIQVYEETTGLGPGAPVETTGEPLSVELGPGLIESMFDGIQRPLEAIAKKAGSYLTKGIEVFSLNRDKKWHFVPKVKHSDKVKAGDILGTVQETEVVNHKIMVPYGIEGEVITIFEGDYTVEDVVCEIDTKDGVKKVKLMQKWPVRKGRPYAKKLNPEAPLVTGQRIIDTFFPVAKGGAAAVPGPFGSGKTVVQHQLAKWGDAQIVVYIGCGERGNEMTDVLNEFPELKDPKTGKSIMERTVLIANTSNMPVAAREACIYTGITIAEYFRDMGYSVALMADSTSRWAEALREMSGRLEEMPGDEGYPAYLGSRLADFYERAGKVVCLGDDEREGAITAIGAVSPPGGDLSEPVTQATLRIVKVFWGLDAQLAYRRHFPAINWLNSYSLYLDSIGRWMDRNVSEEWVDLRTRAMTILQEEANLEEIVRLVGIDALSESDRLKLEVAKSIREDYLMQNAFHDVDTYSSLEKQYKMLKLVLSFQDEAERALKAGVYLEKITSMVELRDKIARAKFIPEEEMGRIDEIGEELRREIDKLIAEEGVINA.

Residue 231-238 participates in ATP binding; it reads GPFGSGKT.

The protein belongs to the ATPase alpha/beta chains family.

It catalyses the reaction ATP + H2O + 4 H(+)(in) = ADP + phosphate + 5 H(+)(out). Its function is as follows. Produces ATP from ADP in the presence of a proton gradient across the membrane. The V-type alpha chain is a catalytic subunit. This chain is V-type ATP synthase alpha chain, found in Clostridium novyi (strain NT).